Here is a 499-residue protein sequence, read N- to C-terminus: Probable cytosol aminopeptidase (499 aa).

2 residues coordinate Mn(2+): Lys263 and Asp268. The active site involves Lys275. Residues Asp286, Asp345, and Glu347 each contribute to the Mn(2+) site. The active site involves Arg349.

It belongs to the peptidase M17 family. It depends on Mn(2+) as a cofactor.

It localises to the cytoplasm. The catalysed reaction is Release of an N-terminal amino acid, Xaa-|-Yaa-, in which Xaa is preferably Leu, but may be other amino acids including Pro although not Arg or Lys, and Yaa may be Pro. Amino acid amides and methyl esters are also readily hydrolyzed, but rates on arylamides are exceedingly low.. It carries out the reaction Release of an N-terminal amino acid, preferentially leucine, but not glutamic or aspartic acids.. Its function is as follows. Presumably involved in the processing and regular turnover of intracellular proteins. Catalyzes the removal of unsubstituted N-terminal amino acids from various peptides. The polypeptide is Probable cytosol aminopeptidase (Chlamydia trachomatis serovar A (strain ATCC VR-571B / DSM 19440 / HAR-13)).